The sequence spans 177 residues: ATP-dependent protease subunit HslV (177 aa).

The active site involves Thr4. Residues Ser159, Cys162, and Thr165 each contribute to the Na(+) site.

Belongs to the peptidase T1B family. HslV subfamily. As to quaternary structure, a double ring-shaped homohexamer of HslV is capped on each side by a ring-shaped HslU homohexamer. The assembly of the HslU/HslV complex is dependent on binding of ATP.

Its subcellular location is the cytoplasm. It catalyses the reaction ATP-dependent cleavage of peptide bonds with broad specificity.. Its activity is regulated as follows. Allosterically activated by HslU binding. Protease subunit of a proteasome-like degradation complex believed to be a general protein degrading machinery. The polypeptide is ATP-dependent protease subunit HslV (Mesorhizobium japonicum (strain LMG 29417 / CECT 9101 / MAFF 303099) (Mesorhizobium loti (strain MAFF 303099))).